A 728-amino-acid polypeptide reads, in one-letter code: Polyribonucleotide nucleotidyltransferase (728 aa).

2 residues coordinate Mg(2+): aspartate 513 and aspartate 519. A KH domain is found at 580–640 (PKVKMILIKP…EIVDLTVTYI (61 aa)). The 75-residue stretch at 650–724 (ENVYEVKILR…ERGQIDLSKK (75 aa)) folds into the S1 motif domain.

It belongs to the polyribonucleotide nucleotidyltransferase family. Mg(2+) is required as a cofactor.

The protein resides in the cytoplasm. It catalyses the reaction RNA(n+1) + phosphate = RNA(n) + a ribonucleoside 5'-diphosphate. Functionally, involved in mRNA degradation. Catalyzes the phosphorolysis of single-stranded polyribonucleotides processively in the 3'- to 5'-direction. This chain is Polyribonucleotide nucleotidyltransferase, found in Phytoplasma mali (strain AT).